The chain runs to 93 residues: Alpha-elapitoxin-Oh3a (93 aa).

The N-terminal stretch at 1–21 (MKTLLLTLVVVTIVCLDLGYT) is a signal peptide. Disulfide bonds link cysteine 24/cysteine 42, cysteine 35/cysteine 63, cysteine 48/cysteine 52, cysteine 67/cysteine 78, and cysteine 79/cysteine 84.

It belongs to the three-finger toxin family. Long-chain subfamily. Type II alpha-neurotoxin sub-subfamily. Expressed by the venom gland.

It is found in the secreted. Binds to muscular and neuronal nicotinic acetylcholine receptor (nAChR) and inhibits acetylcholine from binding to the receptor, thereby impairing neuromuscular and neuronal transmission. Pseudo-irreversibly inhibits twitches in chick biventer cervicis nerve-muscle preparations in a concentration-dependent manner. The protein is Alpha-elapitoxin-Oh3a of Ophiophagus hannah (King cobra).